Reading from the N-terminus, the 189-residue chain is Elongation factor P (189 aa).

Belongs to the elongation factor P family.

The protein resides in the cytoplasm. It functions in the pathway protein biosynthesis; polypeptide chain elongation. In terms of biological role, involved in peptide bond synthesis. Stimulates efficient translation and peptide-bond synthesis on native or reconstituted 70S ribosomes in vitro. Probably functions indirectly by altering the affinity of the ribosome for aminoacyl-tRNA, thus increasing their reactivity as acceptors for peptidyl transferase. The polypeptide is Elongation factor P (Sinorhizobium fredii (strain NBRC 101917 / NGR234)).